Consider the following 193-residue polypeptide: Acyl carrier protein phosphodiesterase (193 aa).

The protein belongs to the AcpH family.

It carries out the reaction holo-[ACP] + H2O = apo-[ACP] + (R)-4'-phosphopantetheine + H(+). In terms of biological role, converts holo-ACP to apo-ACP by hydrolytic cleavage of the phosphopantetheine prosthetic group from ACP. This Escherichia coli O6:K15:H31 (strain 536 / UPEC) protein is Acyl carrier protein phosphodiesterase.